The following is a 477-amino-acid chain: ATP synthase subunit beta (477 aa).

163–170 is a binding site for ATP; sequence GGAGVGKT.

Belongs to the ATPase alpha/beta chains family. F-type ATPases have 2 components, CF(1) - the catalytic core - and CF(0) - the membrane proton channel. CF(1) has five subunits: alpha(3), beta(3), gamma(1), delta(1), epsilon(1). CF(0) has four main subunits: a(1), b(1), b'(1) and c(9-12).

It localises to the cellular thylakoid membrane. It carries out the reaction ATP + H2O + 4 H(+)(in) = ADP + phosphate + 5 H(+)(out). In terms of biological role, produces ATP from ADP in the presence of a proton gradient across the membrane. The catalytic sites are hosted primarily by the beta subunits. This Synechococcus sp. (strain JA-2-3B'a(2-13)) (Cyanobacteria bacterium Yellowstone B-Prime) protein is ATP synthase subunit beta.